Consider the following 309-residue polypeptide: Elongation factor Ts (309 aa).

Residues 98–101 form an involved in Mg(2+) ion dislocation from EF-Tu region; the sequence is TDFV.

This sequence belongs to the EF-Ts family.

The protein localises to the cytoplasm. In terms of biological role, associates with the EF-Tu.GDP complex and induces the exchange of GDP to GTP. It remains bound to the aminoacyl-tRNA.EF-Tu.GTP complex up to the GTP hydrolysis stage on the ribosome. The protein is Elongation factor Ts of Orientia tsutsugamushi (strain Boryong) (Rickettsia tsutsugamushi).